We begin with the raw amino-acid sequence, 375 residues long: Anhydro-N-acetylmuramic acid kinase (375 aa).

ATP is bound at residue 12–19; that stretch reads GTSMDGVD.

It belongs to the anhydro-N-acetylmuramic acid kinase family.

It catalyses the reaction 1,6-anhydro-N-acetyl-beta-muramate + ATP + H2O = N-acetyl-D-muramate 6-phosphate + ADP + H(+). It participates in amino-sugar metabolism; 1,6-anhydro-N-acetylmuramate degradation. It functions in the pathway cell wall biogenesis; peptidoglycan recycling. Its function is as follows. Catalyzes the specific phosphorylation of 1,6-anhydro-N-acetylmuramic acid (anhMurNAc) with the simultaneous cleavage of the 1,6-anhydro ring, generating MurNAc-6-P. Is required for the utilization of anhMurNAc either imported from the medium or derived from its own cell wall murein, and thus plays a role in cell wall recycling. The sequence is that of Anhydro-N-acetylmuramic acid kinase from Photobacterium profundum (strain SS9).